A 48-amino-acid polypeptide reads, in one-letter code: uncharacterized protein (48 aa).

The helical transmembrane segment at T25–W47 threads the bilayer.

It localises to the membrane. This is an uncharacterized protein from Archaeoglobus fulgidus (strain ATCC 49558 / DSM 4304 / JCM 9628 / NBRC 100126 / VC-16).